Here is a 29-residue protein sequence, read N- to C-terminus: Cyclotide vibi-C (29 aa).

The segment at residues 1-29 (GLPVCGETCAFGSCYTPGCSCSWPVCTRN) is a cross-link (cyclopeptide (Gly-Asn)). Cystine bridges form between C5/C19, C9/C21, and C14/C26.

In terms of processing, this is a cyclic peptide.

Probably participates in a plant defense mechanism. The protein is Cyclotide vibi-C of Viola biflora (Yellow wood violet).